A 126-amino-acid polypeptide reads, in one-letter code: UPF0102 protein MXAN_3551 (126 aa).

The protein belongs to the UPF0102 family.

This chain is UPF0102 protein MXAN_3551, found in Myxococcus xanthus (strain DK1622).